The chain runs to 362 residues: Phospho-N-acetylmuramoyl-pentapeptide-transferase (362 aa).

10 helical membrane passes run 18–38 (VFGY…AISL), 73–93 (TMGG…WGDL), 97–117 (YVWV…VDDW), 134–154 (YFWT…SATT), 160–180 (LIVP…FIAL), 200–220 (GLAI…AYVA), 237–257 (AGEL…FLWF), 264–284 (VFMG…IAVV), 289–309 (IVLF…MVQV), and 339–359 (QVVV…LSTL).

The protein belongs to the glycosyltransferase 4 family. MraY subfamily. It depends on Mg(2+) as a cofactor.

The protein localises to the cell inner membrane. It catalyses the reaction UDP-N-acetyl-alpha-D-muramoyl-L-alanyl-gamma-D-glutamyl-meso-2,6-diaminopimeloyl-D-alanyl-D-alanine + di-trans,octa-cis-undecaprenyl phosphate = di-trans,octa-cis-undecaprenyl diphospho-N-acetyl-alpha-D-muramoyl-L-alanyl-D-glutamyl-meso-2,6-diaminopimeloyl-D-alanyl-D-alanine + UMP. It participates in cell wall biogenesis; peptidoglycan biosynthesis. In terms of biological role, catalyzes the initial step of the lipid cycle reactions in the biosynthesis of the cell wall peptidoglycan: transfers peptidoglycan precursor phospho-MurNAc-pentapeptide from UDP-MurNAc-pentapeptide onto the lipid carrier undecaprenyl phosphate, yielding undecaprenyl-pyrophosphoryl-MurNAc-pentapeptide, known as lipid I. This chain is Phospho-N-acetylmuramoyl-pentapeptide-transferase, found in Azoarcus sp. (strain BH72).